Consider the following 89-residue polypeptide: Small ribosomal subunit protein bS16 (89 aa).

It belongs to the bacterial ribosomal protein bS16 family.

This Psychrobacter arcticus (strain DSM 17307 / VKM B-2377 / 273-4) protein is Small ribosomal subunit protein bS16.